A 279-amino-acid polypeptide reads, in one-letter code: Dihydropteroate synthase type-1 (279 aa).

The region spanning 1–258 (MVTVFGILNL…APGDLRSAIT (258 aa)) is the Pterin-binding domain. Asparagine 9 serves as a coordination point for Mg(2+). (7,8-dihydropterin-6-yl)methyl diphosphate contacts are provided by residues aspartate 82, asparagine 101, aspartate 173, lysine 212, and 246 to 248 (RTH).

Belongs to the DHPS family. As to quaternary structure, homodimer or homotrimer. Mg(2+) serves as cofactor.

The catalysed reaction is (7,8-dihydropterin-6-yl)methyl diphosphate + 4-aminobenzoate = 7,8-dihydropteroate + diphosphate. It functions in the pathway cofactor biosynthesis; tetrahydrofolate biosynthesis; 7,8-dihydrofolate from 2-amino-4-hydroxy-6-hydroxymethyl-7,8-dihydropteridine diphosphate and 4-aminobenzoate: step 1/2. Catalyzes the condensation of para-aminobenzoate (pABA) with 6-hydroxymethyl-7,8-dihydropterin diphosphate (DHPt-PP) to form 7,8-dihydropteroate (H2Pte), the immediate precursor of folate derivatives. The protein is Dihydropteroate synthase type-1 (sulI) of Corynebacterium glutamicum (Brevibacterium saccharolyticum).